A 136-amino-acid polypeptide reads, in one-letter code: UPF0275 protein PM0493 (136 aa).

The protein belongs to the UPF0275 family.

This is UPF0275 protein PM0493 from Pasteurella multocida (strain Pm70).